The chain runs to 277 residues: Release factor glutamine methyltransferase (277 aa).

Residues 119–123 (GTGTG), D142, and N184 contribute to the S-adenosyl-L-methionine site. Substrate is bound at residue 184–187 (NPPY).

Belongs to the protein N5-glutamine methyltransferase family. PrmC subfamily.

The catalysed reaction is L-glutaminyl-[peptide chain release factor] + S-adenosyl-L-methionine = N(5)-methyl-L-glutaminyl-[peptide chain release factor] + S-adenosyl-L-homocysteine + H(+). In terms of biological role, methylates the class 1 translation termination release factors RF1/PrfA and RF2/PrfB on the glutamine residue of the universally conserved GGQ motif. The polypeptide is Release factor glutamine methyltransferase (Enterococcus faecalis (strain ATCC 700802 / V583)).